Consider the following 644-residue polypeptide: MFQDNPLLAQLKQQLHSQTPRAEGVVKATEKGFGFLEVDAQKSYFIPPPQMKKVMHGDRIIAVIHSEKDRESAEPEELVEPFLTRFVGKVQGKNDRLSIVPDHPLLKDAIPCRAARGVDHQFKEGDWAVAEMRRHPLKGDRSFYAELTQFITFGDDHFVPWWVTLARHNLEREAPNGVATEMLDEGLVRQDLTALNFVTIDSASTEDMDDALYAEALPDGKLQLTVAIADPTAWIAEGSKLDNVAKIRAFTNYLPGFNIPMLPRELSDDLCSLRAFEVRPALACRMTIAADGTIEDDIEFFAATIESKAKLVYDEVSDWLENSGNWQPENDAIAEQIRLLAQICQRRGEWRHNHALVFKDRPDYRFILGEKGEVLDIVAEPRRIANRIVEEAMIAANICAARVLRDKIGFGIYNVHMGFDPANADALAALLKTHGLHVDAQEVLTLEGFCKLRRELDAQPSGFLDSRIRRFQSFAEISTQPGPHFGLGLEAYATWTSPIRKYGDMINHRLLKAAIKGETASRPQDETTVQMTERRRLNRMAERDVGDWLYARFLKDKAGTDTRFAAEIIDISRGGMRVRLVDNGAVAFIPAPFLHAVRDELVCSQENGTVQIKGETVYKVTDVIDVTIAEVRMETRSIIARPVA.

Positions 189 to 516 (RQDLTALNFV…NHRLLKAAIK (328 aa)) constitute an RNB domain. Residues 561 to 643 (DTRFAAEIID…ETRSIIARPV (83 aa)) enclose the S1 motif domain.

This sequence belongs to the RNR ribonuclease family. RNase II subfamily.

The protein resides in the cytoplasm. The enzyme catalyses Exonucleolytic cleavage in the 3'- to 5'-direction to yield nucleoside 5'-phosphates.. In terms of biological role, involved in mRNA degradation. Hydrolyzes single-stranded polyribonucleotides processively in the 3' to 5' direction. The chain is Exoribonuclease 2 from Escherichia fergusonii (strain ATCC 35469 / DSM 13698 / CCUG 18766 / IAM 14443 / JCM 21226 / LMG 7866 / NBRC 102419 / NCTC 12128 / CDC 0568-73).